A 108-amino-acid polypeptide reads, in one-letter code: Pyrimidine/purine nucleoside phosphorylase (108 aa).

The protein belongs to the nucleoside phosphorylase PpnP family.

It carries out the reaction a purine D-ribonucleoside + phosphate = a purine nucleobase + alpha-D-ribose 1-phosphate. The enzyme catalyses adenosine + phosphate = alpha-D-ribose 1-phosphate + adenine. It catalyses the reaction cytidine + phosphate = cytosine + alpha-D-ribose 1-phosphate. The catalysed reaction is guanosine + phosphate = alpha-D-ribose 1-phosphate + guanine. It carries out the reaction inosine + phosphate = alpha-D-ribose 1-phosphate + hypoxanthine. The enzyme catalyses thymidine + phosphate = 2-deoxy-alpha-D-ribose 1-phosphate + thymine. It catalyses the reaction uridine + phosphate = alpha-D-ribose 1-phosphate + uracil. The catalysed reaction is xanthosine + phosphate = alpha-D-ribose 1-phosphate + xanthine. In terms of biological role, catalyzes the phosphorolysis of diverse nucleosides, yielding D-ribose 1-phosphate and the respective free bases. Can use uridine, adenosine, guanosine, cytidine, thymidine, inosine and xanthosine as substrates. Also catalyzes the reverse reactions. The polypeptide is Pyrimidine/purine nucleoside phosphorylase (Polaromonas sp. (strain JS666 / ATCC BAA-500)).